The following is a 429-amino-acid chain: Threonine synthase (429 aa).

Lysine 108 carries the N6-(pyridoxal phosphate)lysine modification.

Belongs to the threonine synthase family. Pyridoxal 5'-phosphate serves as cofactor.

It catalyses the reaction O-phospho-L-homoserine + H2O = L-threonine + phosphate. The protein operates within amino-acid biosynthesis; L-threonine biosynthesis; L-threonine from L-aspartate: step 5/5. Its function is as follows. Catalyzes the gamma-elimination of phosphate from L-phosphohomoserine and the beta-addition of water to produce L-threonine. This is Threonine synthase (thrC) from Buchnera aphidicola subsp. Schizaphis graminum (strain Sg).